A 547-amino-acid polypeptide reads, in one-letter code: Chaperonin GroEL (547 aa).

ATP is bound by residues 30–33 (TLGP), Lys51, 87–91 (DGTTT), Gly415, and Asp496. Residues 527–547 (SDKAEPMPMRGGMGGMGGMDF) form a disordered region. The segment covering 537-547 (GGMGGMGGMDF) has biased composition (gly residues).

Belongs to the chaperonin (HSP60) family. Forms a cylinder of 14 subunits composed of two heptameric rings stacked back-to-back. Interacts with the co-chaperonin GroES.

It localises to the cytoplasm. It catalyses the reaction ATP + H2O + a folded polypeptide = ADP + phosphate + an unfolded polypeptide.. In terms of biological role, together with its co-chaperonin GroES, plays an essential role in assisting protein folding. The GroEL-GroES system forms a nano-cage that allows encapsulation of the non-native substrate proteins and provides a physical environment optimized to promote and accelerate protein folding. The protein is Chaperonin GroEL of Rickettsia rickettsii (strain Sheila Smith).